The sequence spans 275 residues: 3-methyl-2-oxobutanoate hydroxymethyltransferase (275 aa).

Positions 49 and 88 each coordinate Mg(2+). Residues 49–50, aspartate 88, and lysine 118 contribute to the 3-methyl-2-oxobutanoate site; that span reads DS. Glutamate 120 provides a ligand contact to Mg(2+). The active-site Proton acceptor is the glutamate 187.

Belongs to the PanB family. In terms of assembly, homodecamer; pentamer of dimers. Mg(2+) is required as a cofactor.

The protein localises to the cytoplasm. The enzyme catalyses 3-methyl-2-oxobutanoate + (6R)-5,10-methylene-5,6,7,8-tetrahydrofolate + H2O = 2-dehydropantoate + (6S)-5,6,7,8-tetrahydrofolate. It participates in cofactor biosynthesis; (R)-pantothenate biosynthesis; (R)-pantoate from 3-methyl-2-oxobutanoate: step 1/2. In terms of biological role, catalyzes the reversible reaction in which hydroxymethyl group from 5,10-methylenetetrahydrofolate is transferred onto alpha-ketoisovalerate to form ketopantoate. In Brucella suis (strain ATCC 23445 / NCTC 10510), this protein is 3-methyl-2-oxobutanoate hydroxymethyltransferase.